The chain runs to 437 residues: tRNA modification GTPase MnmE (437 aa).

Positions 21, 79, and 119 each coordinate (6S)-5-formyl-5,6,7,8-tetrahydrofolate. The region spanning 223–364 (GFRVVLAGPP…FRSALIAHAR (142 aa)) is the TrmE-type G domain. Residues 233–238 (NAGKST), 252–258 (AAEPGTT), and 277–280 (DTAG) contribute to the GTP site. The Mg(2+) site is built by serine 237 and threonine 258. Position 437 (lysine 437) interacts with (6S)-5-formyl-5,6,7,8-tetrahydrofolate.

This sequence belongs to the TRAFAC class TrmE-Era-EngA-EngB-Septin-like GTPase superfamily. TrmE GTPase family. In terms of assembly, homodimer. Heterotetramer of two MnmE and two MnmG subunits. It depends on K(+) as a cofactor.

It localises to the cytoplasm. Its function is as follows. Exhibits a very high intrinsic GTPase hydrolysis rate. Involved in the addition of a carboxymethylaminomethyl (cmnm) group at the wobble position (U34) of certain tRNAs, forming tRNA-cmnm(5)s(2)U34. In Novosphingobium aromaticivorans (strain ATCC 700278 / DSM 12444 / CCUG 56034 / CIP 105152 / NBRC 16084 / F199), this protein is tRNA modification GTPase MnmE.